The following is a 183-amino-acid chain: SAGA-associated factor 11 homolog (183 aa).

The segment at 98-119 adopts an SGF11-type zinc-finger fold; the sequence is CSCPNCNRIVAASRFAPHLEKC. Residues 140–167 are disordered; the sequence is GGNYFGADEDDEDDADWSGEKRKKKIAP. The span at 146 to 156 shows a compositional bias: acidic residues; the sequence is ADEDDEDDADW.

It belongs to the SGF11 family. In terms of assembly, component of some SAGA transcription coactivator-HAT complexes. Within the SAGA complex, participates in a subcomplex of SAGA called the DUB module (deubiquitination module).

The protein localises to the nucleus. Its function is as follows. Component of the transcription regulatory histone acetylation (HAT) complex SAGA, a multiprotein complex that activates transcription by remodeling chromatin and mediating histone acetylation and deubiquitination. Within the SAGA complex, participates in a subcomplex that specifically deubiquitinates histone H2B. The SAGA complex is recruited to specific gene promoters by activators, where it is required for transcription. The chain is SAGA-associated factor 11 homolog from Culex quinquefasciatus (Southern house mosquito).